Here is a 514-residue protein sequence, read N- to C-terminus: Major facilitator superfamily domain-containing protein 4A (514 aa).

5 helical membrane passes run 19–39, 53–73, 82–102, 107–127, and 139–159; these read LTYW…GPTL, ISWV…LGGV, LWAL…IPFC, VLAL…TVAN, and AVFL…SPLI. 2 N-linked (GlcNAc...) asparagine glycosylation sites follow: Asn177 and Asn203. The next 7 membrane-spanning stretches (helical) occupy residues 221 to 241, 307 to 327, 347 to 367, 376 to 396, 400 to 420, 438 to 458, and 466 to 486; these read YAFW…LMLL, FFAI…LTGA, VAGY…LLSI, ATMV…LLIF, VVFL…TFPS, VLVT…GSIF, and FLVC…LLLF.

The protein belongs to the major facilitator superfamily.

Its subcellular location is the membrane. The protein is Major facilitator superfamily domain-containing protein 4A (MFSD4A) of Pongo abelii (Sumatran orangutan).